The following is a 427-amino-acid chain: GTPase Obg (427 aa).

Residues 1–158 form the Obg domain; that stretch reads MFVDKVKVYV…RDVILELKVL (158 aa). The interval 118-144 is disordered; the sequence is KGGRGGRGNTRFATPANPAPELSENGE. An OBG-type G domain is found at 159–329; that stretch reads ADAGLVGFPS…LLRAIMDTIE (171 aa). GTP is bound by residues 165–172, 190–194, 212–215, 282–285, and 310–312; these read GFPSVGKS, FTTIT, DLPG, NKMD, and SAL. Positions 172 and 192 each coordinate Mg(2+). The 79-residue stretch at 349-427 folds into the OCT domain; it reads KHDKEQDPFV…LLEFEFEFIE (79 aa).

Belongs to the TRAFAC class OBG-HflX-like GTPase superfamily. OBG GTPase family. Monomer. Mg(2+) serves as cofactor.

Its subcellular location is the cytoplasm. An essential GTPase which binds GTP, GDP and possibly (p)ppGpp with moderate affinity, with high nucleotide exchange rates and a fairly low GTP hydrolysis rate. Plays a role in control of the cell cycle, stress response, ribosome biogenesis and in those bacteria that undergo differentiation, in morphogenesis control. The protein is GTPase Obg of Halalkalibacterium halodurans (strain ATCC BAA-125 / DSM 18197 / FERM 7344 / JCM 9153 / C-125) (Bacillus halodurans).